Reading from the N-terminus, the 89-residue chain is Small ribosomal subunit protein uS15 (89 aa).

Belongs to the universal ribosomal protein uS15 family. Part of the 30S ribosomal subunit. Forms a bridge to the 50S subunit in the 70S ribosome, contacting the 23S rRNA.

In terms of biological role, one of the primary rRNA binding proteins, it binds directly to 16S rRNA where it helps nucleate assembly of the platform of the 30S subunit by binding and bridging several RNA helices of the 16S rRNA. Functionally, forms an intersubunit bridge (bridge B4) with the 23S rRNA of the 50S subunit in the ribosome. This is Small ribosomal subunit protein uS15 from Streptococcus gordonii (strain Challis / ATCC 35105 / BCRC 15272 / CH1 / DL1 / V288).